The following is a 290-amino-acid chain: Lipoyl synthase (290 aa).

Positions 44, 49, 55, 70, 74, 77, and 282 each coordinate [4Fe-4S] cluster. Residues 56-271 (WGEGTATFMI…ELLGKEMGFR (216 aa)) enclose the Radical SAM core domain.

This sequence belongs to the radical SAM superfamily. Lipoyl synthase family. The cofactor is [4Fe-4S] cluster.

It is found in the cytoplasm. It carries out the reaction [[Fe-S] cluster scaffold protein carrying a second [4Fe-4S](2+) cluster] + N(6)-octanoyl-L-lysyl-[protein] + 2 oxidized [2Fe-2S]-[ferredoxin] + 2 S-adenosyl-L-methionine + 4 H(+) = [[Fe-S] cluster scaffold protein] + N(6)-[(R)-dihydrolipoyl]-L-lysyl-[protein] + 4 Fe(3+) + 2 hydrogen sulfide + 2 5'-deoxyadenosine + 2 L-methionine + 2 reduced [2Fe-2S]-[ferredoxin]. Its pathway is protein modification; protein lipoylation via endogenous pathway; protein N(6)-(lipoyl)lysine from octanoyl-[acyl-carrier-protein]: step 2/2. Its function is as follows. Catalyzes the radical-mediated insertion of two sulfur atoms into the C-6 and C-8 positions of the octanoyl moiety bound to the lipoyl domains of lipoate-dependent enzymes, thereby converting the octanoylated domains into lipoylated derivatives. The sequence is that of Lipoyl synthase from Flavobacterium psychrophilum (strain ATCC 49511 / DSM 21280 / CIP 103535 / JIP02/86).